We begin with the raw amino-acid sequence, 91 residues long: Probable Fe(2+)-trafficking protein (91 aa).

It belongs to the Fe(2+)-trafficking protein family.

Functionally, could be a mediator in iron transactions between iron acquisition and iron-requiring processes, such as synthesis and/or repair of Fe-S clusters in biosynthetic enzymes. In Cupriavidus metallidurans (strain ATCC 43123 / DSM 2839 / NBRC 102507 / CH34) (Ralstonia metallidurans), this protein is Probable Fe(2+)-trafficking protein.